The sequence spans 207 residues: Proteasome subunit beta (207 aa).

Residues 1-9 (MSNKNTFEG) constitute a propeptide, removed in mature form; by autocatalysis. Catalysis depends on T10, which acts as the Nucleophile.

Belongs to the peptidase T1B family. The 20S proteasome core is composed of 14 alpha and 14 beta subunits that assemble into four stacked heptameric rings, resulting in a barrel-shaped structure. The two inner rings, each composed of seven catalytic beta subunits, are sandwiched by two outer rings, each composed of seven alpha subunits. The catalytic chamber with the active sites is on the inside of the barrel. Has a gated structure, the ends of the cylinder being occluded by the N-termini of the alpha-subunits. Is capped at one or both ends by the proteasome regulatory ATPase, PAN.

It is found in the cytoplasm. The enzyme catalyses Cleavage of peptide bonds with very broad specificity.. Its activity is regulated as follows. The formation of the proteasomal ATPase PAN-20S proteasome complex, via the docking of the C-termini of PAN into the intersubunit pockets in the alpha-rings, triggers opening of the gate for substrate entry. Interconversion between the open-gate and close-gate conformations leads to a dynamic regulation of the 20S proteasome proteolysis activity. Its function is as follows. Component of the proteasome core, a large protease complex with broad specificity involved in protein degradation. This Methanobrevibacter ruminantium (strain ATCC 35063 / DSM 1093 / JCM 13430 / OCM 146 / M1) (Methanobacterium ruminantium) protein is Proteasome subunit beta.